Reading from the N-terminus, the 57-residue chain is Temporin-ALk (57 aa).

The first 22 residues, 1–22, serve as a signal peptide directing secretion; that stretch reads MFTLKKSLLLLFFLGTINLSLC. A propeptide spanning residues 23 to 46 is cleaved from the precursor; sequence EQERNAEEERRDDLGERQAEVEKR. Position 56 is a serine amide (serine 56).

This sequence belongs to the frog skin active peptide (FSAP) family. Temporin subfamily. Expressed by the skin glands.

The protein localises to the secreted. In terms of biological role, antimicrobial peptide with weak activity against Gram-positive and Gram-negative bacteria and against fungi. Has been tested against S.aureus (MIC=15.0 ug/mL), B.pumilus (no activity detected), B.cereus (no activity detected), E.coli (MIC=30.0 ug/mL), B.dysenteriae (MIC=60.0 ug/mL), A.cacoaceticus (MIC=75.0 ug/mL), P.aeruginosa (MIC=25.0 ug/mL) and C.albicans (MIC=15.0 ug/mL). Also shows a weak hemolytic activity. The polypeptide is Temporin-ALk (Amolops loloensis (Lolokou Sucker Frog)).